The chain runs to 123 residues: UPF0738 protein BCE_1319 (123 aa).

It belongs to the UPF0738 family.

The polypeptide is UPF0738 protein BCE_1319 (Bacillus cereus (strain ATCC 10987 / NRS 248)).